A 188-amino-acid polypeptide reads, in one-letter code: dCTP deaminase (188 aa).

Residues K111–R116, T135–E137, Q156, Y170, and Q180 each bind dCTP. E137 acts as the Proton donor/acceptor in catalysis.

This sequence belongs to the dCTP deaminase family. Homotrimer.

The catalysed reaction is dCTP + H2O + H(+) = dUTP + NH4(+). It functions in the pathway pyrimidine metabolism; dUMP biosynthesis; dUMP from dCTP (dUTP route): step 1/2. Catalyzes the deamination of dCTP to dUTP. This chain is dCTP deaminase, found in Ralstonia pickettii (strain 12J).